A 189-amino-acid chain; its full sequence is Elongation factor P (189 aa).

It belongs to the elongation factor P family.

It localises to the cytoplasm. The protein operates within protein biosynthesis; polypeptide chain elongation. Its function is as follows. Involved in peptide bond synthesis. Stimulates efficient translation and peptide-bond synthesis on native or reconstituted 70S ribosomes in vitro. Probably functions indirectly by altering the affinity of the ribosome for aminoacyl-tRNA, thus increasing their reactivity as acceptors for peptidyl transferase. This Pseudomonas putida (strain GB-1) protein is Elongation factor P.